Here is a 1402-residue protein sequence, read N- to C-terminus: DNA-directed RNA polymerase subunit beta' (1402 aa).

Zn(2+) contacts are provided by Cys70, Cys72, Cys85, and Cys88. Residues Asp460, Asp462, and Asp464 each contribute to the Mg(2+) site. Positions 812, 886, 893, and 896 each coordinate Zn(2+). The segment at Asp1373–Asp1402 is disordered.

The protein belongs to the RNA polymerase beta' chain family. In terms of assembly, the RNAP catalytic core consists of 2 alpha, 1 beta, 1 beta' and 1 omega subunit. When a sigma factor is associated with the core the holoenzyme is formed, which can initiate transcription. Requires Mg(2+) as cofactor. Zn(2+) is required as a cofactor.

The enzyme catalyses RNA(n) + a ribonucleoside 5'-triphosphate = RNA(n+1) + diphosphate. Its function is as follows. DNA-dependent RNA polymerase catalyzes the transcription of DNA into RNA using the four ribonucleoside triphosphates as substrates. In Dichelobacter nodosus (strain VCS1703A), this protein is DNA-directed RNA polymerase subunit beta'.